The chain runs to 380 residues: Chorismate synthase (380 aa).

Arginine 48 provides a ligand contact to NADP(+). FMN contacts are provided by residues 126 to 128 (HFS), glycine 300, 315 to 319 (KPISS), and arginine 342.

Belongs to the chorismate synthase family. Homotetramer. It depends on FMNH2 as a cofactor.

It catalyses the reaction 5-O-(1-carboxyvinyl)-3-phosphoshikimate = chorismate + phosphate. It functions in the pathway metabolic intermediate biosynthesis; chorismate biosynthesis; chorismate from D-erythrose 4-phosphate and phosphoenolpyruvate: step 7/7. Functionally, catalyzes the anti-1,4-elimination of the C-3 phosphate and the C-6 proR hydrogen from 5-enolpyruvylshikimate-3-phosphate (EPSP) to yield chorismate, which is the branch point compound that serves as the starting substrate for the three terminal pathways of aromatic amino acid biosynthesis. This reaction introduces a second double bond into the aromatic ring system. This is Chorismate synthase from Lancefieldella parvula (strain ATCC 33793 / DSM 20469 / CCUG 32760 / JCM 10300 / KCTC 3663 / VPI 0546 / 1246) (Atopobium parvulum).